The primary structure comprises 61 residues: Small ribosomal subunit protein uS14 (61 aa).

Zn(2+)-binding residues include Cys24, Cys27, Cys40, and Cys43.

The protein belongs to the universal ribosomal protein uS14 family. Zinc-binding uS14 subfamily. Part of the 30S ribosomal subunit. Contacts proteins S3 and S10. The cofactor is Zn(2+).

Functionally, binds 16S rRNA, required for the assembly of 30S particles and may also be responsible for determining the conformation of the 16S rRNA at the A site. The protein is Small ribosomal subunit protein uS14 of Mycoplasmoides gallisepticum (strain R(low / passage 15 / clone 2)) (Mycoplasma gallisepticum).